Reading from the N-terminus, the 270-residue chain is MHPALKYMRQDRLPHIFCSGCGNGIVMNCFLKAIEELNIKPEDYIAVSGIGCSSRVPGYLYCDSLHTTHGRPIAFATGIKIARPDKHVVVFTGDGDLAAIGGNHFIHGCRRNIDLTVICINNNIYGMTGGQVSPTTPYGKKATTAPYGSIENTMDLCKMAIAAGATYVARWTTAHPIQLVRSIKKGIQKKGFAFIEVVSQCPTYYGRFNISRKPADMIKFLKENSIHLNKAKDMSEEELNGKIVVGEFLDIEKPEFVEELHKLIEKLKSE.

Heterotetramer of the KorA, KorB, KorC and KorD subunits.

It carries out the reaction 2 oxidized [2Fe-2S]-[ferredoxin] + 2-oxoglutarate + CoA = succinyl-CoA + 2 reduced [2Fe-2S]-[ferredoxin] + CO2 + H(+). The chain is 2-oxoglutarate synthase subunit KorB (korB) from Methanocaldococcus jannaschii (strain ATCC 43067 / DSM 2661 / JAL-1 / JCM 10045 / NBRC 100440) (Methanococcus jannaschii).